Here is a 408-residue protein sequence, read N- to C-terminus: Acetate kinase (408 aa).

Asn7 contacts Mg(2+). Lys14 lines the ATP pocket. Arg91 is a substrate binding site. The Proton donor/acceptor role is filled by Asp148. ATP is bound by residues 208-212 (HLGNG), 283-285 (DFR), and 331-335 (GIGEN). Glu384 serves as a coordination point for Mg(2+).

Belongs to the acetokinase family. In terms of assembly, homodimer. Mg(2+) serves as cofactor. It depends on Mn(2+) as a cofactor.

It is found in the cytoplasm. It carries out the reaction acetate + ATP = acetyl phosphate + ADP. It functions in the pathway metabolic intermediate biosynthesis; acetyl-CoA biosynthesis; acetyl-CoA from acetate: step 1/2. Functionally, catalyzes the formation of acetyl phosphate from acetate and ATP. Can also catalyze the reverse reaction. This Methanosarcina acetivorans (strain ATCC 35395 / DSM 2834 / JCM 12185 / C2A) protein is Acetate kinase.